A 495-amino-acid chain; its full sequence is Glutelin type-B 2 (495 aa).

Residues 1-24 form the signal peptide; the sequence is MATTIFSRFSIYFCAMLLCQGSMA. 2 disulfide bridges follow: C45–C78 and C121–C305. Cupin type-1 domains are found at residues 50–245 and 311–460; these read LQAF…VAAK and VNIE…EQAR. The tract at residues 464 to 495 is disordered; sequence NNRGEEHGAFTPRFQQQYYPGFSNESESETSE.

It belongs to the 11S seed storage protein (globulins) family. Hexamer; each subunit is composed of an acidic and a basic chain derived from a single precursor and linked by a disulfide bond.

Seed storage protein. The sequence is that of Glutelin type-B 2 (GLUB2) from Oryza sativa subsp. japonica (Rice).